Consider the following 132-residue polypeptide: Small ribosomal subunit protein uS8 (132 aa).

This sequence belongs to the universal ribosomal protein uS8 family. In terms of assembly, part of the 30S ribosomal subunit. Contacts proteins S5 and S12.

One of the primary rRNA binding proteins, it binds directly to 16S rRNA central domain where it helps coordinate assembly of the platform of the 30S subunit. This Xanthomonas euvesicatoria pv. vesicatoria (strain 85-10) (Xanthomonas campestris pv. vesicatoria) protein is Small ribosomal subunit protein uS8.